The chain runs to 486 residues: MKINIILLFVGLILAFAVLSNAISIKNDGGVNPFDNNNSGSGSGSGSGGGSSSSGSGTGQSSGTVSSSGSASNNTSSGSQSGNASSGSSSGSSSGSSSGSSSGSSSGSQSGNASSGSSSSGSSGSQSGNASSGTSSGSSSSSGSSQSGNASSGPSSGTTSSSGSSQSESSQSGNASSGPSSGTTSSSGSSQSESSQSESSQSGSASSGPSSGTTSSSGSSQSDSSSFTTTGSQGSSGSSGSSQSDSSSFTTTGSGSGSSQDSMSGSDSMSGSDSMSGSDSMSGSSFTGGNSGGSTSTGSGSYSGNPSLTGSSEYSSSSSGGGSGSHGGSSSHPNGWTDVGQFLLGLAEGLVSTVASNTKLCFQSVGSSITDFENAFQLIDSGFSRLSKPLIEQGLMDLGSGLLEVAIAFETCNVQNLASEIKALATNIESGELGILEVIVKETINIFHNGNQLTTEFKLTISDYKSQNYLGMGYNIGGIVGILLKD.

Positions 1–22 are cleaved as a signal peptide; that stretch reads MKINIILLFVGLILAFAVLSNA. The disordered stretch occupies residues 30 to 332; it reads GVNPFDNNNS…SGSHGGSSSH (303 aa). N37 carries N-linked (GlcNAc...) asparagine glycosylation. Residues 41–60 are compositionally biased toward gly residues; it reads SGSGSGSGGGSSSSGSGTGQ. Positions 61–318 are enriched in low complexity; that stretch reads SSGTVSSSGS…TGSSEYSSSS (258 aa). N-linked (GlcNAc...) asparagine glycosylation is found at N73, N74, N83, N112, N129, N149, and N174.

It belongs to the Sct family.

The protein localises to the secreted. This Dictyostelium discoideum (Social amoeba) protein is Secreted protein C.